The following is a 227-amino-acid chain: Orotate phosphoribosyltransferase 2 (227 aa).

41 to 42 contributes to the orotate binding site; the sequence is FF. Residues 79-80, R109, K110, K113, H115, and 135-143 contribute to the 5-phospho-alpha-D-ribose 1-diphosphate site; these read YK and DDVMTAGTA. Orotate-binding residues include T139 and R167.

The protein belongs to the purine/pyrimidine phosphoribosyltransferase family. PyrE subfamily. In terms of assembly, homodimer.

It carries out the reaction orotidine 5'-phosphate + diphosphate = orotate + 5-phospho-alpha-D-ribose 1-diphosphate. The protein operates within pyrimidine metabolism; UMP biosynthesis via de novo pathway; UMP from orotate: step 1/2. Its function is as follows. Catalyzes the transfer of a ribosyl phosphate group from 5-phosphoribose 1-diphosphate to orotate, leading to the formation of orotidine monophosphate (OMP). This Saccharomyces cerevisiae (strain ATCC 204508 / S288c) (Baker's yeast) protein is Orotate phosphoribosyltransferase 2 (URA10).